The chain runs to 88 residues: uncharacterized protein (88 aa).

An N-terminal signal peptide occupies residues 1-25; that stretch reads MRAAFWVGCAALLLSACSSEPVQQA.

This is an uncharacterized protein from Escherichia coli O6:H1 (strain CFT073 / ATCC 700928 / UPEC).